The sequence spans 486 residues: Aromatic-L-amino-acid decarboxylase (486 aa).

An N-acetylmethionine modification is found at Met1. 2 consecutive repeat copies span residues Gln58–Glu115 and Met118–Ala178. The 2 X approximate tandem repeats stretch occupies residues Gln58–Ala178. Residue Thr82 coordinates substrate. Pyridoxal 5'-phosphate is bound by residues Ala148 and Ser149. A substrate-binding site is contributed by His192. Residues Thr246 and Asn300 each contribute to the pyridoxal 5'-phosphate site. Lys303 carries the post-translational modification N6-(pyridoxal phosphate)lysine.

Belongs to the group II decarboxylase family. In terms of assembly, homodimer. The cofactor is pyridoxal 5'-phosphate.

The enzyme catalyses L-dopa + H(+) = dopamine + CO2. The catalysed reaction is 5-hydroxy-L-tryptophan + H(+) = serotonin + CO2. It functions in the pathway catecholamine biosynthesis; dopamine biosynthesis; dopamine from L-tyrosine: step 2/2. In terms of biological role, catalyzes the decarboxylation of L-3,4-dihydroxyphenylalanine (DOPA) to dopamine and L-5-hydroxytryptophan to serotonin. The sequence is that of Aromatic-L-amino-acid decarboxylase (DDC) from Sus scrofa (Pig).